Reading from the N-terminus, the 315-residue chain is tRNA-cytidine(32) 2-sulfurtransferase (315 aa).

Residues 39–44 (SGGKDS) carry the PP-loop motif motif. Positions 114, 117, and 205 each coordinate [4Fe-4S] cluster.

Belongs to the TtcA family. As to quaternary structure, homodimer. The cofactor is Mg(2+). It depends on [4Fe-4S] cluster as a cofactor.

It is found in the cytoplasm. It catalyses the reaction cytidine(32) in tRNA + S-sulfanyl-L-cysteinyl-[cysteine desulfurase] + AH2 + ATP = 2-thiocytidine(32) in tRNA + L-cysteinyl-[cysteine desulfurase] + A + AMP + diphosphate + H(+). It participates in tRNA modification. Its function is as follows. Catalyzes the ATP-dependent 2-thiolation of cytidine in position 32 of tRNA, to form 2-thiocytidine (s(2)C32). The sulfur atoms are provided by the cysteine/cysteine desulfurase (IscS) system. This chain is tRNA-cytidine(32) 2-sulfurtransferase, found in Ralstonia pickettii (strain 12J).